The following is a 365-amino-acid chain: Patr class I histocompatibility antigen, A-126 alpha chain (365 aa).

The signal sequence occupies residues Met-1–Ala-24. An alpha-1 region spans residues Gly-25–Asp-114. Topologically, residues Gly-25–Ile-308 are extracellular. Asn-110 carries an N-linked (GlcNAc...) asparagine glycan. Residues Gly-115–Thr-206 form an alpha-2 region. 2 cysteine pairs are disulfide-bonded: Cys-125/Cys-188 and Cys-227/Cys-283. An alpha-3 region spans residues Asp-207–Trp-298. The region spanning Pro-209–Thr-295 is the Ig-like C1-type domain. The segment at Glu-299 to Ile-308 is connecting peptide. The helical transmembrane segment at Val-309–Trp-332 threads the bilayer. Over Arg-333–Val-365 the chain is Cytoplasmic. Positions Asp-338–Val-365 are disordered. A compositionally biased stretch (low complexity) spans Gly-342–Ser-359. A Phosphoserine modification is found at Ser-343. Tyr-344 bears the Phosphotyrosine mark. Residues Ser-345, Ser-349, Ser-352, Ser-356, and Ser-359 each carry the phosphoserine modification.

This sequence belongs to the MHC class I family. As to quaternary structure, heterodimer of an alpha chain and a beta chain (beta-2-microglobulin).

The protein localises to the membrane. Its function is as follows. Involved in the presentation of foreign antigens to the immune system. The chain is Patr class I histocompatibility antigen, A-126 alpha chain (Patr-A) from Pan troglodytes (Chimpanzee).